We begin with the raw amino-acid sequence, 252 residues long: MIEHIFIFNNSTSLSNPVFDISEVAVGQHLYWQIGDYQLHGQVLITSWIVLGGVIIFTLLANSDLKPLPVGLQNFTELVTEFIRDLAKTQIGEEEYLKWVPFLGTIFIFVFVSNWAGALLPWRLIELPNGELAAPTNDINTTVSLALLTSVSYFYAGIRKKGLGYFKRYIQPVVFLLPLNVLEDFSKPLSLSFRLFGNILADELIVGVLVALVPLFVPIPLMLLGVFTSAIQALVFATLAGAYIGESIEDHH.

5 consecutive transmembrane segments (helical) span residues 41–61 (GQVLITSWIVLGGVIIFTLLA), 100–120 (VPFLGTIFIFVFVSNWAGALL), 138–158 (DINTTVSLALLTSVSYFYAGI), 204–224 (LIVGVLVALVPLFVPIPLMLL), and 225–245 (GVFTSAIQALVFATLAGAYIG).

The protein belongs to the ATPase A chain family. F-type ATPases have 2 components, CF(1) - the catalytic core - and CF(0) - the membrane proton channel. CF(1) has five subunits: alpha(3), beta(3), gamma(1), delta(1), epsilon(1). CF(0) has four main subunits: a, b, b' and c.

The protein localises to the plastid. The protein resides in the chloroplast thylakoid membrane. Key component of the proton channel; it plays a direct role in the translocation of protons across the membrane. In Oedogonium cardiacum (Filamentous green alga), this protein is ATP synthase subunit a, chloroplastic.